The sequence spans 263 residues: Acyl-[acyl-carrier-protein]--UDP-N-acetylglucosamine O-acyltransferase (263 aa).

It belongs to the transferase hexapeptide repeat family. LpxA subfamily. Homotrimer.

Its subcellular location is the cytoplasm. The enzyme catalyses a (3R)-hydroxyacyl-[ACP] + UDP-N-acetyl-alpha-D-glucosamine = a UDP-3-O-[(3R)-3-hydroxyacyl]-N-acetyl-alpha-D-glucosamine + holo-[ACP]. Its pathway is glycolipid biosynthesis; lipid IV(A) biosynthesis; lipid IV(A) from (3R)-3-hydroxytetradecanoyl-[acyl-carrier-protein] and UDP-N-acetyl-alpha-D-glucosamine: step 1/6. Its function is as follows. Involved in the biosynthesis of lipid A, a phosphorylated glycolipid that anchors the lipopolysaccharide to the outer membrane of the cell. This Caulobacter vibrioides (strain ATCC 19089 / CIP 103742 / CB 15) (Caulobacter crescentus) protein is Acyl-[acyl-carrier-protein]--UDP-N-acetylglucosamine O-acyltransferase.